Reading from the N-terminus, the 478-residue chain is Geranial dehydrogenase (478 aa).

Residue 230–235 participates in NAD(+) binding; the sequence is GSTSAG. Residue Glu252 is the Proton acceptor of the active site. Cys286 serves as the catalytic Nucleophile.

This sequence belongs to the aldehyde dehydrogenase family.

It carries out the reaction (2E)-geranial + NAD(+) + H2O = geranate + NADH + 2 H(+). It catalyses the reaction perillyl aldehyde + NAD(+) + H2O = perillate + NADH + 2 H(+). It participates in terpene metabolism; monoterpene degradation. In terms of biological role, involved in the degradation of the monoterpenes beta-myrcene and limonene. During anaerobic degradation of beta-myrcene, catalyzes the NAD(+)-dependent oxidation of geranial to geranic acid. Seems to be specific for the trans-isomer geranial, since it does not act on the cis-isomer neral. During degradation of limonene, catalyzes the NAD(+)-dependent conversion of perillyl aldehyde to perrilic acid. The polypeptide is Geranial dehydrogenase (Castellaniella defragrans (strain DSM 12143 / CCUG 39792 / 65Phen) (Alcaligenes defragrans)).